Reading from the N-terminus, the 417-residue chain is Sulfite reductase, dissimilatory-type subunit alpha (417 aa).

The [4Fe-4S] cluster site is built by Cys170, Cys176, Cys214, Cys218, Cys264, Cys284, Cys287, and Cys290. Cys218 is a binding site for siroheme.

It depends on [4Fe-4S] cluster as a cofactor. The cofactor is siroheme.

It catalyses the reaction [DsrC protein]-trisulfide + NAD(+) + 3 H2O = [DsrC protein]-dithiol + sulfite + NADH + 3 H(+). In terms of biological role, catalyzes the reduction of sulfite to sulfide. This is the terminal oxidation reaction in sulfate respiration. This is Sulfite reductase, dissimilatory-type subunit alpha (dsrA) from Allochromatium vinosum (strain ATCC 17899 / DSM 180 / NBRC 103801 / NCIMB 10441 / D) (Chromatium vinosum).